The chain runs to 147 residues: Protein MioC (147 aa).

The Flavodoxin-like domain occupies 4–143 (ITLISGSTLG…PAEEWLGSWV (140 aa)).

The protein belongs to the flavodoxin family. MioC subfamily. Homodimer. It depends on FMN as a cofactor.

Probable electron transporter required for biotin synthase activity. The protein is Protein MioC (mioC) of Escherichia coli (strain K12).